Reading from the N-terminus, the 357-residue chain is Alanine racemase (357 aa).

Lys-35 serves as the catalytic Proton acceptor; specific for D-alanine. The residue at position 35 (Lys-35) is an N6-(pyridoxal phosphate)lysine. Arg-128 is a binding site for substrate. The active-site Proton acceptor; specific for L-alanine is Tyr-254. Met-302 is a substrate binding site.

This sequence belongs to the alanine racemase family. Requires pyridoxal 5'-phosphate as cofactor.

The enzyme catalyses L-alanine = D-alanine. The protein operates within amino-acid biosynthesis; D-alanine biosynthesis; D-alanine from L-alanine: step 1/1. In terms of biological role, catalyzes the interconversion of L-alanine and D-alanine. May also act on other amino acids. The polypeptide is Alanine racemase (alr) (Marinobacter nauticus (strain ATCC 700491 / DSM 11845 / VT8) (Marinobacter aquaeolei)).